The chain runs to 79 residues: RNA-binding protein KhpA (79 aa).

Residues 32–79 (FLEYHLNLDQSDVGRVIGRKGRTISAIRTIVYSVPTEYKKVRIVIDEK) form the KH domain.

This sequence belongs to the KhpA RNA-binding protein family. Forms a complex with KhpB. KhpA and KhpB colocalize throughout the cell cycle, with some increase at midcell in dividing cells.

It is found in the cytoplasm. In terms of biological role, a probable RNA chaperone. Forms a complex with KhpB which presumably binds to about 170 cellular RNAs (mRNA, tRNA intergenic RNA and sRNAs); the proteins alone each bind the same set of RNAs. A mutation in this gene suppresses the requirement for PBP2b (penA, a transpeptidase) in peripheral peptidoglycan (PG) synthesis. Probably plays a role in PG homeostasis and regulating peripheral PG synthesis. This chain is RNA-binding protein KhpA, found in Streptococcus pneumoniae serotype 2 (strain D39 / NCTC 7466).